The sequence spans 224 residues: Cysteine S-methyltransferase NleE (224 aa).

An interaction with host proteins TAB2, TAB3 and ZRANB3 region spans residues 49 to 52 (GITR). Residues Ala-92, Ser-98, Arg-107, Gln-111, Tyr-204, and Glu-208 each coordinate S-adenosyl-L-methionine.

Belongs to the NleE/OspZ family. Monomer.

The protein localises to the secreted. The protein resides in the host nucleus. It carries out the reaction L-cysteinyl-[protein] + S-adenosyl-L-methionine = S-methyl-L-cysteinyl-[protein] + S-adenosyl-L-homocysteine + H(+). Functionally, cysteine methyltransferase effector that inhibits host cell NF-kappa-B activation by preventing nuclear translocation of host protein RELA/p65. Acts by mediating cysteine methylation of host proteins TAB2 and TAB3: methylation of a conserved cysteine residue of the RanBP2-type zinc finger (NZF) of TAB2 and TAB3 disrupts zinc-binding, thereby inactivating the ubiquitin chain-binding activity of TAB2 and TAB3, leading to NF-kappa-B inactivation. Also mediates cysteine methylation of host protein ZRANB3, inactivating its ability to bind ubiquitin chains. The chain is Cysteine S-methyltransferase NleE from Escherichia coli O127:H6 (strain E2348/69 / EPEC).